Here is a 142-residue protein sequence, read N- to C-terminus: Two-component response regulator ARR22 (142 aa).

Positions 23–140 (NVLIVDDDPL…KIFPLISHLF (118 aa)) constitute a Response regulatory domain. 4-aspartylphosphate is present on D74.

The protein belongs to the ARR family. Type-A subfamily. Two-component system major event consists of a His-to-Asp phosphorelay between a sensor histidine kinase (HK) and a response regulator (RR). In plants, the His-to-Asp phosphorelay involves an additional intermediate named Histidine-containing phosphotransfer protein (HPt). This multistep phosphorelay consists of a His-Asp-His-Asp sequential transfer of a phosphate group between first a His and an Asp of the HK protein, followed by the transfer to a conserved His of the HPt protein and finally the transfer to an Asp in the receiver domain of the RR protein.

It is found in the nucleus. Functionally, functions as a response regulator involved in His-to-Asp phosphorelay signal transduction system. Phosphorylation of the Asp residue in the receiver domain activates the ability of the protein to promote the transcription of target genes. Type-A response regulators seem to act as negative regulators of the cytokinin signaling. The chain is Two-component response regulator ARR22 (ARR22) from Arabidopsis thaliana (Mouse-ear cress).